The following is a 96-amino-acid chain: Small ribosomal subunit protein bS6 (96 aa).

Belongs to the bacterial ribosomal protein bS6 family.

Functionally, binds together with bS18 to 16S ribosomal RNA. This is Small ribosomal subunit protein bS6 from Thermobifida fusca (strain YX).